We begin with the raw amino-acid sequence, 434 residues long: ATP-dependent protease ATPase subunit HslU (434 aa).

ATP-binding positions include Ile-18, 60-65, Asp-247, Glu-312, and Arg-384; that span reads GVGKTE.

This sequence belongs to the ClpX chaperone family. HslU subfamily. In terms of assembly, a double ring-shaped homohexamer of HslV is capped on each side by a ring-shaped HslU homohexamer. The assembly of the HslU/HslV complex is dependent on binding of ATP.

It localises to the cytoplasm. Its function is as follows. ATPase subunit of a proteasome-like degradation complex; this subunit has chaperone activity. The binding of ATP and its subsequent hydrolysis by HslU are essential for unfolding of protein substrates subsequently hydrolyzed by HslV. HslU recognizes the N-terminal part of its protein substrates and unfolds these before they are guided to HslV for hydrolysis. This Brucella abortus (strain S19) protein is ATP-dependent protease ATPase subunit HslU.